Consider the following 325-residue polypeptide: Putative HTH-type transcriptional regulatory protein MK1005 (325 aa).

The HTH cro/C1-type domain maps to 128–190 (VDELDVSRVR…FERRVAELLE (63 aa)). Residues 139–158 (RQLRREGGRITLARAEEADV) constitute a DNA-binding region (H-T-H motif).

This Methanopyrus kandleri (strain AV19 / DSM 6324 / JCM 9639 / NBRC 100938) protein is Putative HTH-type transcriptional regulatory protein MK1005.